Consider the following 425-residue polypeptide: uncharacterized protein (425 aa).

This is an uncharacterized protein from Salmonella typhimurium (strain LT2 / SGSC1412 / ATCC 700720).